A 285-amino-acid chain; its full sequence is Enterobactin synthase component B (285 aa).

The segment at 2–213 (AIPKLQAYAL…EELLPAPIPA (212 aa)) is isochorismatase. Positions 209 to 284 (APIPASKAAL…AWWKLLSREV (76 aa)) constitute a Carrier domain. Mg(2+)-binding residues include Asp-227, Gly-242, and Asp-244. The residue at position 245 (Ser-245) is an O-(pantetheine 4'-phosphoryl)serine.

This sequence in the N-terminal section; belongs to the isochorismatase family. Proteins EntB, EntD, EntE, and EntF form a multienzyme complex called enterobactin synthase. Homodimer. Also forms a specific pairwise interaction with EntC; this interaction likely facilitates substrate channeling to connect the EntB and EntC active sites. The cofactor is Mg(2+). In terms of processing, 4'-phosphopantetheine is transferred from CoA to a specific serine of apo-EntB by EntD. Holo-EntB so formed is then acylated with 2,3-dihydroxybenzoate in a reaction catalyzed by EntE.

The protein resides in the cytoplasm. It catalyses the reaction 3 2,3-dihydroxybenzoate + 3 L-serine + 6 ATP = enterobactin + 6 AMP + 6 diphosphate + 4 H(+). The enzyme catalyses isochorismate + H2O = (2S,3S)-2,3-dihydroxy-2,3-dihydrobenzoate + pyruvate. It functions in the pathway siderophore biosynthesis; enterobactin biosynthesis. Functionally, involved in the biosynthesis of the siderophore enterobactin (enterochelin), which is a macrocyclic trimeric lactone of N-(2,3-dihydroxybenzoyl)-serine. The serine trilactone serves as a scaffolding for the three catechol functionalities that provide hexadentate coordination for the tightly ligated iron(3+) atoms. EntB is a bifunctional protein that serves as an isochorismate lyase and an aryl carrier protein (ArCP). Catalyzes the conversion of isochorismate to 2,3-dihydro-2,3-dihydroxybenzoate (2,3-diDHB), the precursor of 2,3-dihydroxybenzoate (DHB). In the enterobactin assembly, EntB functions as an aryl carrier protein phosphopantetheinylated near the C terminus by EntD to yield holo-EntB, which is then acylated by EntE with 2,3-dihydroxybenzoyl-AMP to form DHB-holo-EntB. Then this product will serve in the formation of the amide bond between 2,3-dihydroxybenzoate (DHB) and L-serine. In Escherichia coli O157:H7, this protein is Enterobactin synthase component B.